A 723-amino-acid polypeptide reads, in one-letter code: MAPYLQHFIAWFGKDSILSKLIQIFNPPSHSDSAKIIISDDDGRSPEPPGGEEILWRHSAPKSTQMWAFLQKVNKKYGYSLRTYQDLHHWSITHRGQFWGEAWDYCGIRHSRQYDEVVDEAAAMWPRPAWFRGARLNFAENLLFPKVPQAVSDEAIAVISVDEGGKRDFITWQDLRERVRRCQSGMRALKIQPSDRVAGYVANHSNALVAMLATASLGAIWTAVSPDTGVIGAVDRLVQIEPRLLFTDNAVIYNGRIHPVLTKTQEIITALPSLEAVVVMRTVAGVQEDLPSSPRSPAKRLTYNSFLAQGPETQKLEFVHMPAEHPLYILYSSGTTGPPKCIVHGAIGTLMQHKKEHMLQSDIQPGDRLCFVTTCMWMMWHWLVSGLASGATVVLYNGSPFYYAPSSHGTSAKDDLAMPKLVDELGITQFGASATYFSMLERRKHLPRSLTQGRLSLETLKAVYSTGSPLAPSTFRYIYQAFGSQVNLGSISGGTDIIADFGVPSPLQAVVAGEIQVIALGMAVQAWGPTGMDLSVTGEPGELVQFWGPSGASKYESSYFAKYPGVWAHGDHIQINPRTGGLIMLGRSDGTLNPKGVRFGSAEIYHVLQYHFAAQVEDALCVGRRRRQDTDEMVVLFVKMRQDQLWSLALAEAIRRTVREELSPRHVPELIIECPEIPVTANGKKVEVLVKRIVSGVEVPAAGGSGTVNADCLQWFQEWATQN.

This sequence belongs to the ATP-dependent AMP-binding enzyme family.

Its pathway is secondary metabolite biosynthesis; terpenoid biosynthesis. Functionally, malonamoyl-CoA synthetase; part of the gene cluster that mediates the biosynthesis of viridicatumtoxin, a tetracycline-like fungal meroterpenoid with a unique, fused spirobicyclic ring system. The first step of the pathway is the production of the malonamoyl-CoA starter unit for the polyketide synthase vrtA. The aldolase vrtJ may be involved in the synthesis of the malonamate substrate for malonamoyl-CoA synthetase vrtB. The polyketide synthase vrtA then may utilize the malonamoyl-CoA starter unit, followed by sequential condensation of eight malonyl-CoA units to form the polyketide backbone. The cyclization of the last ring could be mediated by the lactamase-like protein vrtG. The proposed post-PKS tailoring steps are a hydroxylation at C5 catalyzed the cytochrome P450 monooxygenase vrtE, a hydroxylation at C12a catalyzed by VrtH and/or VrtI, and an O-methylation by the O-methyltransferase vrtF. VrtC is then proposed to catalyze the transfer of a geranyl group synthesized by vrtD to the aromatic C ring of the tetracyclic polyketide intermediate of viridicatumtoxin to yield previridicatumtoxin. Finally, the cytochrome P450 monooxygenase vrtK catalyzes the spirocyclization of the geranyl moiety of previridicatumtoxin to afford viridicatumtoxin. This chain is Malonamoyl-CoA synthetase vrtB, found in Penicillium aethiopicum.